Consider the following 130-residue polypeptide: Small ribosomal subunit protein uS8 (130 aa).

It belongs to the universal ribosomal protein uS8 family. In terms of assembly, part of the 30S ribosomal subunit. Contacts proteins S5 and S12.

In terms of biological role, one of the primary rRNA binding proteins, it binds directly to 16S rRNA central domain where it helps coordinate assembly of the platform of the 30S subunit. The chain is Small ribosomal subunit protein uS8 from Stutzerimonas stutzeri (strain A1501) (Pseudomonas stutzeri).